The following is a 75-amino-acid chain: uncharacterized protein (75 aa).

Transmembrane regions (helical) follow at residues 5 to 25 (VIICLLFTYYVIWSLLPIFEI) and 42 to 62 (VAIFLPIFLLLIGFTLTGSVL).

It localises to the membrane. This is an uncharacterized protein from Saccharomyces cerevisiae (strain ATCC 204508 / S288c) (Baker's yeast).